We begin with the raw amino-acid sequence, 346 residues long: MAEITAALVKELREKSGAGVMDAKKALVETDGDIEKAIELLREKGMAKAAKKADRVAAEGLTGVYVDGNVAAVVEVNAETDFVAKNAQFVELVNTTAKVIAEGKPADNEAALKLAMPSGETLEEAYVNATATIGEKISFRRFALVEKTDAQAFGAYQHNGGRIGVISVVDGGDETLAKQISMHIAAMKPTVLSYTELDEQFVKDELAQINHKIEQDNESRAMVNKPVLPLLKYGSKAQLTDEVIAAAEEAIKAELAAEGKPEKIWDKIIPGKMDRFLLDNTQVDQAYTLLAQVYIMDDSKTVEAYLNSVNASVVEFARFEVGEGIEKASNDFEAEVAATMAAALGK.

An involved in Mg(2+) ion dislocation from EF-Tu region spans residues 80–83 (TDFV).

This sequence belongs to the EF-Ts family.

It localises to the cytoplasm. Associates with the EF-Tu.GDP complex and induces the exchange of GDP to GTP. It remains bound to the aminoacyl-tRNA.EF-Tu.GTP complex up to the GTP hydrolysis stage on the ribosome. This Streptococcus suis (strain 98HAH33) protein is Elongation factor Ts.